Here is a 140-residue protein sequence, read N- to C-terminus: MATERTFSIIKPDATRRNLTGAITAKLEEAGLRVVASKRIHMTKEQAEGFYGVHRERPFFGDLVSFMISGPVVVQVLEGENAVARNREVMGATNPANADEGTIRKTFAESIEANSVHGSDSAENAKIEIDFFFKPEEIVG.

The ATP site is built by Lys-11, Phe-59, Arg-87, Thr-93, Arg-104, and Asn-114. Catalysis depends on His-117, which acts as the Pros-phosphohistidine intermediate.

The protein belongs to the NDK family. Homotetramer. The cofactor is Mg(2+).

It localises to the cytoplasm. The catalysed reaction is a 2'-deoxyribonucleoside 5'-diphosphate + ATP = a 2'-deoxyribonucleoside 5'-triphosphate + ADP. It carries out the reaction a ribonucleoside 5'-diphosphate + ATP = a ribonucleoside 5'-triphosphate + ADP. Its function is as follows. Major role in the synthesis of nucleoside triphosphates other than ATP. The ATP gamma phosphate is transferred to the NDP beta phosphate via a ping-pong mechanism, using a phosphorylated active-site intermediate. The polypeptide is Nucleoside diphosphate kinase (Rhizorhabdus wittichii (strain DSM 6014 / CCUG 31198 / JCM 15750 / NBRC 105917 / EY 4224 / RW1) (Sphingomonas wittichii)).